The following is a 564-amino-acid chain: Dihydroxy-acid dehydratase (564 aa).

A Mg(2+)-binding site is contributed by Asp78. Cys119 lines the [2Fe-2S] cluster pocket. Residues Asp120 and Lys121 each coordinate Mg(2+). Lys121 carries the N6-carboxylysine modification. Residue Cys192 participates in [2Fe-2S] cluster binding. Glu451 is a binding site for Mg(2+). Ser477 serves as the catalytic Proton acceptor.

The protein belongs to the IlvD/Edd family. As to quaternary structure, homodimer. It depends on [2Fe-2S] cluster as a cofactor. The cofactor is Mg(2+).

It carries out the reaction (2R)-2,3-dihydroxy-3-methylbutanoate = 3-methyl-2-oxobutanoate + H2O. It catalyses the reaction (2R,3R)-2,3-dihydroxy-3-methylpentanoate = (S)-3-methyl-2-oxopentanoate + H2O. It functions in the pathway amino-acid biosynthesis; L-isoleucine biosynthesis; L-isoleucine from 2-oxobutanoate: step 3/4. It participates in amino-acid biosynthesis; L-valine biosynthesis; L-valine from pyruvate: step 3/4. Its function is as follows. Functions in the biosynthesis of branched-chain amino acids. Catalyzes the dehydration of (2R,3R)-2,3-dihydroxy-3-methylpentanoate (2,3-dihydroxy-3-methylvalerate) into 2-oxo-3-methylpentanoate (2-oxo-3-methylvalerate) and of (2R)-2,3-dihydroxy-3-methylbutanoate (2,3-dihydroxyisovalerate) into 2-oxo-3-methylbutanoate (2-oxoisovalerate), the penultimate precursor to L-isoleucine and L-valine, respectively. The protein is Dihydroxy-acid dehydratase of Nitratiruptor sp. (strain SB155-2).